Consider the following 166-residue polypeptide: Large ribosomal subunit protein uL10 (166 aa).

The protein belongs to the universal ribosomal protein uL10 family. In terms of assembly, part of the ribosomal stalk of the 50S ribosomal subunit. The N-terminus interacts with L11 and the large rRNA to form the base of the stalk. The C-terminus forms an elongated spine to which L12 dimers bind in a sequential fashion forming a multimeric L10(L12)X complex.

Functionally, forms part of the ribosomal stalk, playing a central role in the interaction of the ribosome with GTP-bound translation factors. This Neisseria gonorrhoeae (strain ATCC 700825 / FA 1090) protein is Large ribosomal subunit protein uL10.